We begin with the raw amino-acid sequence, 383 residues long: Homeobox protein SHOOT MERISTEMLESS (383 aa).

The segment at 37–58 is disordered; it reads HQQHHGHDQQHQHQQQHDGYAY. One can recognise an ELK domain in the interval 263–283; it reads ELKGQLLRKYSGYLGSLKQEF. The homeobox; TALE-type DNA-binding region spans 284-347; that stretch reads MKKRKKGKLP…NQRKRHWKPS (64 aa).

Belongs to the TALE/KNOX homeobox family.

Its subcellular location is the nucleus. Required for shoot apical meristem formation during embryogenesis. Probably binds to the DNA sequence 5'-TGAC-3'. The polypeptide is Homeobox protein SHOOT MERISTEMLESS (STM) (Brassica oleracea (Wild cabbage)).